A 289-amino-acid polypeptide reads, in one-letter code: Probable porphobilinogen deaminase (289 aa).

The residue at position 233 (C233) is an S-(dipyrrolylmethanemethyl)cysteine.

This sequence belongs to the HMBS family. The cofactor is dipyrromethane.

The catalysed reaction is 4 porphobilinogen + H2O = hydroxymethylbilane + 4 NH4(+). It functions in the pathway porphyrin-containing compound metabolism; protoporphyrin-IX biosynthesis; coproporphyrinogen-III from 5-aminolevulinate: step 2/4. Functionally, tetrapolymerization of the monopyrrole PBG into the hydroxymethylbilane pre-uroporphyrinogen in several discrete steps. The chain is Probable porphobilinogen deaminase (hemC) from Methanothermobacter thermautotrophicus (strain ATCC 29096 / DSM 1053 / JCM 10044 / NBRC 100330 / Delta H) (Methanobacterium thermoautotrophicum).